Here is a 160-residue protein sequence, read N- to C-terminus: SsrA-binding protein (160 aa).

This sequence belongs to the SmpB family.

The protein resides in the cytoplasm. Its function is as follows. Required for rescue of stalled ribosomes mediated by trans-translation. Binds to transfer-messenger RNA (tmRNA), required for stable association of tmRNA with ribosomes. tmRNA and SmpB together mimic tRNA shape, replacing the anticodon stem-loop with SmpB. tmRNA is encoded by the ssrA gene; the 2 termini fold to resemble tRNA(Ala) and it encodes a 'tag peptide', a short internal open reading frame. During trans-translation Ala-aminoacylated tmRNA acts like a tRNA, entering the A-site of stalled ribosomes, displacing the stalled mRNA. The ribosome then switches to translate the ORF on the tmRNA; the nascent peptide is terminated with the 'tag peptide' encoded by the tmRNA and targeted for degradation. The ribosome is freed to recommence translation, which seems to be the essential function of trans-translation. This is SsrA-binding protein from Zymomonas mobilis subsp. mobilis (strain ATCC 31821 / ZM4 / CP4).